We begin with the raw amino-acid sequence, 282 residues long: Probable methylxanthine N7-demethylase NdmC (282 aa).

It carries out the reaction 7-methylxanthine + NADPH + O2 + H(+) = xanthine + formaldehyde + NADP(+) + H2O. The catalysed reaction is 7-methylxanthine + NADH + O2 + H(+) = xanthine + formaldehyde + NAD(+) + H2O. Functionally, involved in the caffeine degradation, which is the essential first step for assimilating the carbon and nitrogen in caffeine. Probably catalyzes the N7-demethylation of 7-methylxanthine to produce xanthine and formaldehyde. The protein is Probable methylxanthine N7-demethylase NdmC of Pseudomonas sp. (strain TJI-51).